The chain runs to 197 residues: Probable GTP-binding protein EngB (197 aa).

The 174-residue stretch at 24–197 folds into the EngB-type G domain; the sequence is DIPEIALAGR…WDAILEKVNK (174 aa). GTP-binding positions include 32 to 39, 59 to 63, 77 to 80, 144 to 147, and 176 to 178; these read GRSNVGKS, GKTQL, DVPG, TKAD, and FSS. Residues Ser39 and Thr61 each contribute to the Mg(2+) site.

This sequence belongs to the TRAFAC class TrmE-Era-EngA-EngB-Septin-like GTPase superfamily. EngB GTPase family. Mg(2+) serves as cofactor.

Its function is as follows. Necessary for normal cell division and for the maintenance of normal septation. The sequence is that of Probable GTP-binding protein EngB from Streptococcus gordonii (strain Challis / ATCC 35105 / BCRC 15272 / CH1 / DL1 / V288).